The following is an 874-amino-acid chain: MEVLREKVEEEEEAEREEAAERAEWARMEKMMRPVEVRKEENTLKQETLRDLEKKLSEIQITVSAELPAFTKDTIDISKLPVSYKTNTPKEEHLLQVADNFSCQYSHLCPDRVPLFLHPLNECEVPKFVSTTLRPTLMPYPELYNWDSCAQFVSDFLTMVPLPDPLKPPSHLYSSTTVLKYQKGNCFDFSTLLCSMLIGSGYDAYCVNGYGSLDLCHMDLTREVCPLTVKPKETIKKEEKVLPKKYTIKPPRDLCSRFEQEQEVKKQQEIRAQEKKRLREEEERLMEAEKAKPDALHGLRVHSWVLVLSGKREVPENFFIDPFTGHSYSTQDEHFLGIESLWNHKNYWINMQDCWNCCKDLIFDLGDPVRWEYMLLGTDKSQLSLTEEDDSGINDEDDVENLGKEDEDKSFDMPHSWVEQIEISPEAFETRCPNGKKVIQYKRAKLEKWAPYLNSNGLVSRLTTYEDLQCTNILEIKEWYQNREDMLELKHINKTTDLKTDYFKPGHPQALRVHSYKSMQPEMDRVIEFYETARVDGLMKREETPRTMTEYYQGRPDFLSYRHASFGPRVKKLTLSSAESNPRPIVKITERFFRNPAKPAEEDVAERVFLVAEERIQLRYHCREDHITASKREFLRRTEVDSKGNKIIMTPDMCISFEVEPMEHTKKLLYQYEAMMHLKREEKLSRHQVWESELEVLEILKLREEEEAAHTLTISIYDTKRNEKSKEYREAMERMMHEEHLRQVETQLDYLAPFLAQLPPGEKLTRWQAVRLKDECLSDFKQRLINKANLIQARFEKETQELQKKQQWYQENQVTLTPEDEDLYLSYCSQAMFRIRILEQRLNRHKELAPLKYLALEEKLYKDPRLGELQKIFA.

Positions 1–20 (MEVLREKVEEEEEAEREEAA) are disordered. 2 coiled-coil regions span residues 1 to 67 (MEVL…SAEL) and 257 to 297 (RFEQ…DALH). Acidic residues predominate over residues 386–400 (TEEDDSGINDEDDVE). The segment at 386–410 (TEEDDSGINDEDDVENLGKEDEDKS) is disordered. Basic and acidic residues predominate over residues 401–410 (NLGKEDEDKS).

The protein belongs to the DRC7 family. In terms of assembly, component of the nexin-dynein regulatory complex (N-DRC). Interacts with TCTE1/DRC5. Interacts with DRC3 and GAS8/DRC4. In terms of tissue distribution, expressed in the testis.

It is found in the cell projection. It localises to the cilium. Its subcellular location is the flagellum. The protein resides in the cytoplasm. The protein localises to the cytoskeleton. It is found in the cilium axoneme. It localises to the flagellum axoneme. In terms of biological role, component of the nexin-dynein regulatory complex (N-DRC) a key regulator of ciliary/flagellar motility which maintains the alignment and integrity of the distal axoneme and regulates microtubule sliding in motile axonemes. Involved in the regulation of flagellar motility. Essential for male fertility, sperm head morphogenesis and sperm flagellum formation. The polypeptide is Dynein regulatory complex subunit 7 (DRC7) (Pan troglodytes (Chimpanzee)).